The sequence spans 1958 residues: Echinoderm microtubule-associated protein-like 6 (1958 aa).

WD repeat units lie at residues 59–100 (GHND…TVSL), 104–145 (VHTH…LLAS), 148–187 (GHSD…LTAK), 195–233 (GDLQ…RTIQ), 235–273 (AHSA…TKID), 280–321 (GYKG…LILQ), 323–362 (HCEG…LIAR), 364–403 (NMEE…EVVH), 406–445 (DRKE…KKIG), and 561–601 (GHSA…VSNG). Residues 603–626 (LETAPQEGGADSYSEESDSDLSDV) are disordered. The span at 615 to 626 (YSEESDSDLSDV) shows a compositional bias: acidic residues. WD repeat units follow at residues 725–766 (GHDD…CLSL), 770–811 (QHQR…KIAT), 814–853 (GHKD…FTSK), 861–900 (GKLE…KTVK), 901–940 (AHDG…KTYA), 996–1035 (HMEG…RMLA), 1038–1077 (KLKK…DMVS), 1080–1120 (HRKE…RVGI), 1191–1230 (SDIT…QHAR), and 1236–1276 (GHSA…TQES). The span at 1322-1337 (KPHQQLKEVSVEERPP) shows a compositional bias: basic and acidic residues. Positions 1322–1353 (KPHQQLKEVSVEERPPVSRAAPQPEKLQKNNI) are disordered. 10 WD repeats span residues 1412 to 1456 (EHTD…TLSM), 1460 to 1501 (FHSK…KVAS), 1504 to 1543 (GHLE…LLYK), 1553 to 1591 (AKMQ…RLVA), 1593 to 1638 (AHTG…CRAF), 1685 to 1724 (HMEG…LLNK), 1726 to 1767 (SLGH…GKKR), 1768 to 1807 (DRKS…NLNR), 1880 to 1919 (ADKA…KFAK), and 1925 to 1958 (GHSA…WRCL).

This sequence belongs to the WD repeat EMAP family.

It localises to the cytoplasm. The protein resides in the cytoskeleton. Functionally, may modify the assembly dynamics of microtubules, such that microtubules are slightly longer, but more dynamic. The chain is Echinoderm microtubule-associated protein-like 6 (EML6) from Homo sapiens (Human).